The primary structure comprises 467 residues: Serine/threonine-protein kinase US3 homolog (467 aa).

Residues 64–155 form a disordered region; it reads GPEVAPPART…PAGGVTREEA (92 aa). Basic and acidic residues predominate over residues 99–111; the sequence is NERRAATGDEKES. Residues 117 to 144 are compositionally biased toward acidic residues; the sequence is NESESESESESESESGADDGDWDDDDDA. Positions 164–462 constitute a Protein kinase domain; sequence FRIIRRLTPG…AAELLEHPVF (299 aa). ATP is bound by residues 170-178 and lysine 194; that span reads LTPGSEGRV. Aspartate 279 acts as the Proton acceptor in catalysis.

The protein belongs to the protein kinase superfamily. Ser/Thr protein kinase family. In terms of processing, phosphorylated by UL13 homolog; this phosphorylation regulates subsequent phosphorylation of UL31 and UL34 homologs by US3. Autophosphorylated.

The protein localises to the host cytoplasm. Its subcellular location is the host nucleus. The enzyme catalyses L-seryl-[protein] + ATP = O-phospho-L-seryl-[protein] + ADP + H(+). The catalysed reaction is L-threonyl-[protein] + ATP = O-phospho-L-threonyl-[protein] + ADP + H(+). Its function is as follows. Multifunctional serine/threonine kinase that plays a role in several processes including egress of virus particles from the nucleus, modulation of the actin cytoskeleton and inhibition of apoptosis. Phosphorylates UL31 and UL34 homologs, two critical regulators of capsid budding from nucleus to endoplasmic reticulum, thereby facilitating virion egress. Modulates and redistributes host components of the nuclear envelope, including LMNA, emerin/EMD and the nuclear matrix protein MATR3. Phosphorylates envelope glycoprotein B (gB), probably to direct it to the cell surface. Promotes virus intracellular spread by restructuring host cell cytoskeleton. Blocks host apoptosis to extend cell survival and allow efficient viral replication. Promotes viral gene expression by phosphorylating host HDAC2 to reduce viral genome silencing. The protein is Serine/threonine-protein kinase US3 homolog of Bos taurus (Bovine).